The chain runs to 203 residues: Superoxide dismutase [Mn/Fe] (203 aa).

Residues His-27, His-81, Asp-163, and His-167 each coordinate Fe(3+). 4 residues coordinate Mn(2+): His-27, His-81, Asp-163, and His-167.

This sequence belongs to the iron/manganese superoxide dismutase family. Mn(2+) is required as a cofactor. Fe(3+) serves as cofactor.

It catalyses the reaction 2 superoxide + 2 H(+) = H2O2 + O2. In terms of biological role, destroys superoxide anion radicals which are normally produced within the cells and which are toxic to biological systems. Catalyzes the dismutation of superoxide anion radicals into O2 and H2O2 by successive reduction and oxidation of the transition metal ion at the active site. In Streptococcus mutans serotype c (strain ATCC 700610 / UA159), this protein is Superoxide dismutase [Mn/Fe] (sodA).